The following is a 671-amino-acid chain: DNA ligase (671 aa).

Residues 32-36, 81-82, and Glu-113 contribute to the NAD(+) site; these read DAEYD and SL. Lys-115 acts as the N6-AMP-lysine intermediate in catalysis. Positions 136, 173, 290, and 314 each coordinate NAD(+). Residues Cys-408, Cys-411, Cys-426, and Cys-432 each contribute to the Zn(2+) site. Residues 593-671 enclose the BRCT domain; that stretch reads EIDSPFAGKT…EAEMIRLLDA (79 aa).

Belongs to the NAD-dependent DNA ligase family. LigA subfamily. The cofactor is Mg(2+). Mn(2+) is required as a cofactor.

It carries out the reaction NAD(+) + (deoxyribonucleotide)n-3'-hydroxyl + 5'-phospho-(deoxyribonucleotide)m = (deoxyribonucleotide)n+m + AMP + beta-nicotinamide D-nucleotide.. DNA ligase that catalyzes the formation of phosphodiester linkages between 5'-phosphoryl and 3'-hydroxyl groups in double-stranded DNA using NAD as a coenzyme and as the energy source for the reaction. It is essential for DNA replication and repair of damaged DNA. This is DNA ligase from Salmonella schwarzengrund (strain CVM19633).